Reading from the N-terminus, the 63-residue chain is Large ribosomal subunit protein uL30 (63 aa).

Belongs to the universal ribosomal protein uL30 family. In terms of assembly, part of the 50S ribosomal subunit.

The sequence is that of Large ribosomal subunit protein uL30 from Rickettsia peacockii (strain Rustic).